Reading from the N-terminus, the 342-residue chain is Ketol-acid reductoisomerase (NADP(+)) (342 aa).

Positions 2–181 (VKVYYNGDIK…GGARAGVLET (180 aa)) constitute a KARI N-terminal Rossmann domain. NADP(+)-binding positions include 25-28 (YGSQ), Arg-48, Ser-52, and 82-85 (DEQQ). The active site involves His-107. Gly-133 provides a ligand contact to NADP(+). In terms of domain architecture, KARI C-terminal knotted spans 182–327 (TFKEETETDL…RKLREMMPFV (146 aa)). Mg(2+) is bound by residues Asp-190, Glu-194, Glu-226, and Glu-230. Ser-251 is a substrate binding site.

It belongs to the ketol-acid reductoisomerase family. Mg(2+) is required as a cofactor.

The catalysed reaction is (2R)-2,3-dihydroxy-3-methylbutanoate + NADP(+) = (2S)-2-acetolactate + NADPH + H(+). The enzyme catalyses (2R,3R)-2,3-dihydroxy-3-methylpentanoate + NADP(+) = (S)-2-ethyl-2-hydroxy-3-oxobutanoate + NADPH + H(+). It participates in amino-acid biosynthesis; L-isoleucine biosynthesis; L-isoleucine from 2-oxobutanoate: step 2/4. Its pathway is amino-acid biosynthesis; L-valine biosynthesis; L-valine from pyruvate: step 2/4. In terms of biological role, involved in the biosynthesis of branched-chain amino acids (BCAA). Catalyzes an alkyl-migration followed by a ketol-acid reduction of (S)-2-acetolactate (S2AL) to yield (R)-2,3-dihydroxy-isovalerate. In the isomerase reaction, S2AL is rearranged via a Mg-dependent methyl migration to produce 3-hydroxy-3-methyl-2-ketobutyrate (HMKB). In the reductase reaction, this 2-ketoacid undergoes a metal-dependent reduction by NADPH to yield (R)-2,3-dihydroxy-isovalerate. In Bacillus subtilis (strain 168), this protein is Ketol-acid reductoisomerase (NADP(+)).